Consider the following 153-residue polypeptide: MKNLIKNKIKLSTYNITLIEHFIRFLIKGWKKKKAINLLSLSLNYIALTINKDPISTLEMAVRYTIPVYLEVTPSIITNENKTLWHKRFICKSSKVRTFQAIKWIIKAAKEKKDKSLYIHLAKEIVDASRNSGKAVKYKEQMENKLKLAQLHM.

It belongs to the universal ribosomal protein uS7 family. As to quaternary structure, part of the 30S ribosomal subunit.

Its subcellular location is the plastid. One of the primary rRNA binding proteins, it binds directly to 16S rRNA where it nucleates assembly of the head domain of the 30S subunit. The sequence is that of Small ribosomal subunit protein uS7c (rps7) from Helicosporidium sp. subsp. Simulium jonesii (Green alga).